A 148-amino-acid chain; its full sequence is uncharacterized protein (148 aa).

Residues 7 to 148 (LEINYKTDEL…HDVLLWKPIR (142 aa)) enclose the N-acetyltransferase domain.

This is an uncharacterized protein from Staphylococcus aureus (strain Mu50 / ATCC 700699).